Consider the following 196-residue polypeptide: Protein GrpE (196 aa).

A compositionally biased stretch (basic and acidic residues) spans 1–26 (MQEPHNQEPIEEQKLSEMEDTLEKQH). The tract at residues 1–40 (MQEPHNQEPIEEQKLSEMEDTLEKQHSGASTENTERAEEG) is disordered.

The protein belongs to the GrpE family. As to quaternary structure, homodimer.

It is found in the cytoplasm. Its function is as follows. Participates actively in the response to hyperosmotic and heat shock by preventing the aggregation of stress-denatured proteins, in association with DnaK and GrpE. It is the nucleotide exchange factor for DnaK and may function as a thermosensor. Unfolded proteins bind initially to DnaJ; upon interaction with the DnaJ-bound protein, DnaK hydrolyzes its bound ATP, resulting in the formation of a stable complex. GrpE releases ADP from DnaK; ATP binding to DnaK triggers the release of the substrate protein, thus completing the reaction cycle. Several rounds of ATP-dependent interactions between DnaJ, DnaK and GrpE are required for fully efficient folding. In Nitrosomonas eutropha (strain DSM 101675 / C91 / Nm57), this protein is Protein GrpE.